The following is a 265-amino-acid chain: Tryptophan synthase alpha chain (265 aa).

Catalysis depends on proton acceptor residues Glu-48 and Asp-59.

It belongs to the TrpA family. In terms of assembly, tetramer of two alpha and two beta chains.

The catalysed reaction is (1S,2R)-1-C-(indol-3-yl)glycerol 3-phosphate + L-serine = D-glyceraldehyde 3-phosphate + L-tryptophan + H2O. Its pathway is amino-acid biosynthesis; L-tryptophan biosynthesis; L-tryptophan from chorismate: step 5/5. The alpha subunit is responsible for the aldol cleavage of indoleglycerol phosphate to indole and glyceraldehyde 3-phosphate. The chain is Tryptophan synthase alpha chain from Ruthia magnifica subsp. Calyptogena magnifica.